A 222-amino-acid chain; its full sequence is Collectrin (222 aa).

The first 14 residues, 1 to 14 (MLWALFFLVTTIHA), serve as a signal peptide directing secretion. Residues 15 to 141 (ELCRPDAENA…LAPPMDPSVP (127 aa)) are Extracellular-facing. Residues 21–222 (AENAFKVRLS…LTEDERLTPL (202 aa)) form the Collectrin-like domain. N76 and N93 each carry an N-linked (GlcNAc...) asparagine glycan. The helical transmembrane segment at 142-162 (VWIIVFGVIFCIVTVAIALLV) threads the bilayer. Topologically, residues 163-222 (LSGIRQRRRNKKGPPGVEDAEDKCENIITIENGIPCDPLDMKGGHINDGFLTEDERLTPL) are cytoplasmic. T214 and T220 each carry phosphothreonine.

The protein belongs to the CLTRN family. As to quaternary structure, monomer. Homodimer; dimerization prevents CLTRN cleavage by BACE2. Interacts with SLC6A18; this interaction regulates the trafficking of SLC6A18 to the cell membrane and its amino acid transporter activity. Interacts with SLC6A19; this interaction regulates the trafficking of SLC6A19 to the cell membrane and its amino acid transporter activity. Interacts with SNAPIN. Glycosylated. Glycosylation is required for plasma membrane localization and for its cleavage by BACE2. Post-translationally, proteolytically processed in pancreatic beta cells by BACE2 leading to the generation and extracellular release of soluble CLTRN, and a corresponding cell-associated C-terminal fragment which is later cleaved by gamma-secretase. This shedding process inactivates CLTRN. Three cleavage sites have been identified for BACE2, two clustered sites after Phe-116 and Leu-118 and a more membrane proximal site at Phe-125; the preferred BACE2 cleavage site seems to be between Phe-125 and Leu-126, Phe-116 and Leu-118 act as alternative sites. In terms of tissue distribution, kidney; collecting ducts. Pancreas; beta cells of islets.

The protein localises to the cell membrane. Plays an important role in amino acid transport by acting as binding partner of amino acid transporters SLC6A18 and SLC6A19, regulating their trafficking on the cell surface and their activity. May also play a role in trafficking of amino acid transporters SLC3A1 and SLC7A9 to the renal cortical cell membrane. Regulator of SNARE complex function. Stimulator of beta cell replication. The chain is Collectrin from Rattus norvegicus (Rat).